The chain runs to 238 residues: Endothelial protein C receptor (238 aa).

A signal peptide spans 1-17; the sequence is MLTTLLPILLLSGWAFC. At 18 to 210 the chain is on the extracellular side; the sequence is SQDASDGLQR…GSQTSRSYTS (193 aa). Residues asparagine 47, asparagine 64, asparagine 136, and asparagine 172 are each glycosylated (N-linked (GlcNAc...) asparagine). A disulfide bridge links cysteine 118 with cysteine 186. The helical transmembrane segment at 211 to 231 threads the bilayer; that stretch reads LVLGVLVGSFIIAGVAVGIFL. Topologically, residues 232 to 238 are cytoplasmic; it reads CTGGRRC.

Post-translationally, N-glycosylated. In terms of processing, a soluble form exists; probably released by a metalloprotease. Seems to have the same activity as the membrane-bound form. In terms of tissue distribution, expressed strongly in the endothelial cells of arteries and veins in heart and lung, less intensely in capillaries in the lung and skin, and not at all in the endothelium of small vessels of the liver and kidney.

The protein localises to the membrane. Binds activated protein C. Enhances protein C activation by the thrombin-thrombomodulin complex; plays a role in the protein C pathway controlling blood coagulation. In Homo sapiens (Human), this protein is Endothelial protein C receptor (PROCR).